Here is a 91-residue protein sequence, read N- to C-terminus: Putative regulatory protein DSY2730 (91 aa).

It belongs to the RemA family.

In Desulfitobacterium hafniense (strain Y51), this protein is Putative regulatory protein DSY2730.